A 203-amino-acid chain; its full sequence is Ras-related protein Rab-24 (203 aa).

Position 17 is a phosphotyrosine (tyrosine 17). GTP-binding residues include glycine 19, lysine 20, threonine 21, and threonine 40. Threonine 21, threonine 40, and aspartate 63 together coordinate Mg(2+). The tract at residues 30–45 is switch I; that stretch reads DRFLVGPYQNTIGAAF. The interval 63 to 80 is switch II; sequence DTAGSERYEAMSRIYYRG. Residues glycine 66, lysine 121, aspartate 123, and lysine 156 each coordinate GTP. Position 172 is a phosphotyrosine (tyrosine 172). Residues cysteine 200 and cysteine 201 are each lipidated (S-geranylgeranyl cysteine).

This sequence belongs to the small GTPase superfamily. Rab family. In terms of assembly, interacts with ZFYVE20. Does not interact with the GDP dissociation inhibitors ARHGDIA and ARHGDIB. Requires Mg(2+) as cofactor. Post-translationally, prenylated; prenylation is required for RAB24 localization to autophagosomes. Isoprenylation is inefficient compared to other Rab family members. In terms of processing, phosphorylated at Tyr-17 and Tyr-172. Cytosolic pool of RAB24 is more phosphorylated than the membrane-associated pool. In terms of tissue distribution, widely expressed, with highest expression in brain.

The protein localises to the cytoplasm. Its subcellular location is the cytosol. The protein resides in the membrane. It is found in the cytoplasmic vesicle. It localises to the autophagosome membrane. The protein localises to the perinuclear region. Its subcellular location is the cytoskeleton. The protein resides in the spindle. The catalysed reaction is GTP + H2O = GDP + phosphate + H(+). Its activity is regulated as follows. Regulated by guanine nucleotide exchange factors (GEFs) which promote the exchange of bound GDP for free GTP. Regulated by GTPase activating proteins (GAPs) which increase the GTP hydrolysis activity. Inhibited by GDP dissociation inhibitors (GDIs). Its function is as follows. The small GTPases Rab are key regulators of intracellular membrane trafficking, from the formation of transport vesicles to their fusion with membranes. Rabs cycle between an inactive GDP-bound form and an active GTP-bound form that is able to recruit to membranes different sets of downstream effectors directly responsible for vesicle formation, movement, tethering and fusion. RAB24 is an atypical RAB protein that presents low GTPase activity and thereby exists predominantly in the GTP-bound active state. RAB24 is required for the clearance of late autophagic vacuoles under basal conditions. It is not needed for starvation-induced autophagy. Involved in the modulation of meiotic apparatus assembly and meiotic progression during oocyte maturation, possibly through regulation of kinetochore-microtubule interaction. This chain is Ras-related protein Rab-24, found in Mus musculus (Mouse).